We begin with the raw amino-acid sequence, 1095 residues long: Solute carrier family 12 member 1 (1095 aa).

Residues 1-173 (MSVSIPSNSV…EEDMTGVVKF (173 aa)) lie on the Cytoplasmic side of the membrane. Positions 16 to 19 (RFQV) match the RFXV motif motif. A disordered region spans residues 29–49 (AAAVGDSADPPHYEETSFGDE). Residues S57 and S87 each carry the phosphoserine modification. T91, T96, T101, and T114 each carry phosphothreonine. The residue at position 116 (S116) is a Phosphoserine. S126 is subject to Phosphoserine; by AMPK. Position 144 is a phosphoserine (S144). The helical transmembrane segment at 174–194 (GWVKGVLVRCMLNIWGVMLFI) threads the bilayer. Residues 195-197 (RLS) lie on the Extracellular side of the membrane. The helical transmembrane segment at 198 to 218 (WIVGEAGIGLGVLIILLSTMV) threads the bilayer. Residues 219–255 (TSITGLSTSAIATNGFVRGGGAYYLISRSLGPEFGGS) are Cytoplasmic-facing. A helical membrane pass occupies residues 256 to 276 (IGLIFAFANAVAVAMYVVGFA). Topologically, residues 277 to 298 (ETVVDLLKESDSMMVDPTNDIR) are extracellular. A helical membrane pass occupies residues 299–319 (IIGSITVVILLGISVAGMEWE). The Cytoplasmic portion of the chain corresponds to 320–323 (AKAQ). A helical membrane pass occupies residues 324–344 (VILLVILLIAIANFFIGTVIP). Residues 345–375 (SNNEKKSRGFFNYQASIFAENFGPSFTKGEG) are Extracellular-facing. Residues 376-396 (FFSVFAIFFPAATGILAGANI) form a helical membrane-spanning segment. Over 397-413 (SGDLEDPQDAIPRGTML) the chain is Cytoplasmic. The chain crosses the membrane as a helical span at residues 414 to 434 (AIFITTVAYIGVAICVAACVV). Topologically, residues 435–546 (RDATGSMNDT…NNEPLRGYFL (112 aa)) are extracellular. Residues N442 and N452 are each glycosylated (N-linked (GlcNAc...) asparagine). The next 2 helical transmembrane spans lie at 547 to 567 (TFVI…APII) and 568 to 588 (SNFF…ASYA). Over 589-605 (KSPGWRPAYGIYNMWVS) the chain is Extracellular. Residues 606–626 (LFGAILCCAVMFVINWWAAVI) traverse the membrane as a helical segment. Residues 627–1095 (TYVIELFLYI…NHKNVLTFYS (469 aa)) lie on the Cytoplasmic side of the membrane.

Belongs to the SLC12A transporter family. As to quaternary structure, when phosphorylated, interacts with PPP3CB. Post-translationally, phosphorylated at Ser-87, Thr-96 and Thr-101 by OXSR1/OSR1 and STK39/SPAK downstream of WNK kinases (WNK1, WNK2, WNK3 or WNK4), promoting its activity. Short-term cyclosporine administration increases SLC12A1 phosphorylation in kidney thick ascending limb, possibly through the inhibition of PPP3CB/calcineurin A beta phosphatase. Predominantly expressed in kidney (at protein level). As to expression, kidney-specific; most highly expressed in the outer stripe of outer medulla (at protein level). In terms of tissue distribution, kidney-specific; most highly expressed in the cortical thick ascending limb (at protein level). Kidney-specific; most highly expressed in the inner stripe of outer medulla (at protein level).

It localises to the apical cell membrane. It carries out the reaction K(+)(out) + 2 chloride(out) + Na(+)(out) = K(+)(in) + 2 chloride(in) + Na(+)(in). With respect to regulation, activated following phosphorylation by OXSR1/OSR1 and STK39/SPAK downstream of WNK kinases (WNK1, WNK2, WNK3 or WNK4). Inhibited by mercury dichloride and diuretic drug bumetaide. Inactive in isotonic conditions. Renal sodium, potassium and chloride ion cotransporter that mediates the transepithelial NaCl reabsorption in the thick ascending limb and plays an essential role in the urinary concentration and volume regulation. Electrically silent transporter system. In terms of biological role, high affinity, high capacity cotransporter for sodium, potassium and chloride ions, with a coupling ratio 1Na(+):1K(+):2Cl(-). Functionally, high affinity, low capacity cotransporter for sodium, potassium and chloride ions, with a coupling ratio 1Na(+):1K(+):2Cl(-). Its function is as follows. Low affinity, low capacity cotransporter for sodium, potassium and chloride ions, with a coupling ratio 1Na(+):1K(+):2Cl(-). This chain is Solute carrier family 12 member 1 (Slc12a1), found in Mus musculus (Mouse).